A 650-amino-acid polypeptide reads, in one-letter code: Chaperone protein DnaK (650 aa).

T200 is modified (phosphothreonine; by autocatalysis). The span at 612–636 (QQAGAAGAAGAAEGAAHAGGAQQAA) shows a compositional bias: low complexity. The interval 612-650 (QQAGAAGAAGAAEGAAHAGGAQQAADDVVDAEFKEVKKD) is disordered.

This sequence belongs to the heat shock protein 70 family.

Its function is as follows. Acts as a chaperone. In Burkholderia ambifaria (strain ATCC BAA-244 / DSM 16087 / CCUG 44356 / LMG 19182 / AMMD) (Burkholderia cepacia (strain AMMD)), this protein is Chaperone protein DnaK.